The chain runs to 98 residues: Alpha-elicitin MGM-alpha (98 aa).

3 disulfide bridges follow: cysteine 3–cysteine 71, cysteine 27–cysteine 56, and cysteine 51–cysteine 95.

Belongs to the elicitin family.

The protein localises to the secreted. Functionally, induces local and distal defense responses (incompatible hypersensitive reaction) in plants from the solanaceae and cruciferae families. Elicits leaf necrosis and causes the accumulation of pathogenesis-related proteins. Might interact with the lipidic molecules of the plasma membrane. The protein is Alpha-elicitin MGM-alpha of Phytophthora megasperma (Potato pink rot fungus).